Reading from the N-terminus, the 313-residue chain is Putative S-adenosyl-L-methionine-dependent methyltransferase MAP_4064c (313 aa).

S-adenosyl-L-methionine contacts are provided by residues Asp-129 and 158–159; that span reads DL.

The protein belongs to the UPF0677 family.

In terms of biological role, exhibits S-adenosyl-L-methionine-dependent methyltransferase activity. The polypeptide is Putative S-adenosyl-L-methionine-dependent methyltransferase MAP_4064c (Mycolicibacterium paratuberculosis (strain ATCC BAA-968 / K-10) (Mycobacterium paratuberculosis)).